Consider the following 72-residue polypeptide: MAKEDVIEMQGEVTENLPNATFRVKLENGHMVLGHISGKMRMHYIRILPGDKVTVQLTPYDLTKGRIVFRTK.

The region spanning 1-72 (MAKEDVIEMQ…TKGRIVFRTK (72 aa)) is the S1-like domain.

It belongs to the IF-1 family. As to quaternary structure, component of the 30S ribosomal translation pre-initiation complex which assembles on the 30S ribosome in the order IF-2 and IF-3, IF-1 and N-formylmethionyl-tRNA(fMet); mRNA recruitment can occur at any time during PIC assembly.

It localises to the cytoplasm. Functionally, one of the essential components for the initiation of protein synthesis. Stabilizes the binding of IF-2 and IF-3 on the 30S subunit to which N-formylmethionyl-tRNA(fMet) subsequently binds. Helps modulate mRNA selection, yielding the 30S pre-initiation complex (PIC). Upon addition of the 50S ribosomal subunit IF-1, IF-2 and IF-3 are released leaving the mature 70S translation initiation complex. This is Translation initiation factor IF-1 2 from Azoarcus sp. (strain BH72).